Here is a 176-residue protein sequence, read N- to C-terminus: uncharacterized protein (176 aa).

Over residues Met-1–Pro-12 the composition is skewed to polar residues. Disordered regions lie at residues Met-1 to Gln-88 and Val-109 to Ser-132. The segment covering Thr-13–Asn-24 has biased composition (low complexity). Over residues Ser-37–Lys-46 the composition is skewed to polar residues. The segment covering Pro-47–Gln-88 has biased composition (low complexity).

This is an uncharacterized protein from Dictyostelium discoideum (Social amoeba).